Here is a 799-residue protein sequence, read N- to C-terminus: Transcriptional activator FLO8 (799 aa).

A compositionally biased stretch (polar residues) spans 1–10 (MSYKVNSSYP). Disordered regions lie at residues 1-20 (MSYK…EQPY), 37-68 (TNSE…SDLK), 101-127 (AHLD…QNTF), 255-406 (TTGA…RVNK), 431-503 (NSKS…SVIL), 568-622 (ESGK…PHGF), 644-691 (VSQE…YDFD), and 705-758 (AYAS…NENQ). Residues 41 to 55 (QQRQQQQQQQQQQQQ) are compositionally biased toward low complexity. One can recognise a LisH domain in the interval 73-105 (CKNTLNEYIFDFLTKSSLKNTAAAFAQDAHLDR). Positions 270-285 (DFTNVGPTQNRSQNVT) are enriched in polar residues. Low complexity predominate over residues 307 to 317 (NNNTTNNTTNN). The segment covering 318 to 340 (KSPVNQPKSLKTMHSTDKPNNVP) has biased composition (polar residues). The span at 341–353 (TSKSTRSRSATSK) shows a compositional bias: low complexity. Residues 354 to 370 (AKGKVKAGLVAKRRRKN) are compositionally biased toward basic residues. Polar residues-rich tracts occupy residues 371–396 (NTAT…TTSE) and 460–480 (KAST…NSVV). Positions 482–497 (GKKRSPPNTRVSRRKS) are enriched in basic residues. 2 stretches are compositionally biased toward polar residues: residues 584 to 593 (SKVSASSPLS) and 660 to 675 (GNDS…TLST).

This sequence belongs to the FLO8 family.

Its subcellular location is the nucleus. Its function is as follows. Required for diploid filamentous growth, haploid invasive growth and flocculation. Putative transcriptional activator of FLO1. The protein is Transcriptional activator FLO8 (FLO8) of Saccharomyces cerevisiae (strain ATCC 204508 / S288c) (Baker's yeast).